A 225-amino-acid polypeptide reads, in one-letter code: Shikimate kinase (225 aa).

Residue 27–32 (GAGKTT) coordinates ATP. T31 contributes to the Mg(2+) binding site. Substrate-binding residues include D49, R73, and G95. R132 is a binding site for ATP. Residue R150 participates in substrate binding. A disordered region spans residues 186-225 (GGSEPDEAADAAGGSEPDEAADAAGGSEPDEAADAAGGKR).

This sequence belongs to the shikimate kinase family. As to quaternary structure, monomer. It depends on Mg(2+) as a cofactor.

Its subcellular location is the cytoplasm. It carries out the reaction shikimate + ATP = 3-phosphoshikimate + ADP + H(+). The protein operates within metabolic intermediate biosynthesis; chorismate biosynthesis; chorismate from D-erythrose 4-phosphate and phosphoenolpyruvate: step 5/7. In terms of biological role, catalyzes the specific phosphorylation of the 3-hydroxyl group of shikimic acid using ATP as a cosubstrate. The sequence is that of Shikimate kinase from Frankia casuarinae (strain DSM 45818 / CECT 9043 / HFP020203 / CcI3).